Consider the following 340-residue polypeptide: NADPH dehydrogenase (340 aa).

23–26 (SPMC) provides a ligand contact to FMN. Tyrosine 28 lines the substrate pocket. 2 residues coordinate FMN: alanine 60 and glutamine 102. 164-167 (HAAH) contacts substrate. FMN is bound by residues arginine 215 and 307–308 (GR).

This sequence belongs to the NADH:flavin oxidoreductase/NADH oxidase family. NamA subfamily. As to quaternary structure, homotetramer. FMN serves as cofactor.

It catalyses the reaction A + NADPH + H(+) = AH2 + NADP(+). Functionally, catalyzes the reduction of the double bond of an array of alpha,beta-unsaturated aldehydes and ketones. It also reduces the nitro group of nitroester and nitroaromatic compounds. It could have a role in detoxification processes. The sequence is that of NADPH dehydrogenase from Geobacillus thermodenitrificans (strain NG80-2).